The sequence spans 300 residues: Probable L-serine dehydratase, alpha chain (300 aa).

Belongs to the iron-sulfur dependent L-serine dehydratase family. As to quaternary structure, heterodimer of an alpha chain and a beta chain. Requires [4Fe-4S] cluster as cofactor.

The enzyme catalyses L-serine = pyruvate + NH4(+). It functions in the pathway carbohydrate biosynthesis; gluconeogenesis. This Bacillus subtilis (strain 168) protein is Probable L-serine dehydratase, alpha chain (sdaAA).